A 348-amino-acid chain; its full sequence is Quinone oxidoreductase-like protein 1 (348 aa).

The protein belongs to the zinc-containing alcohol dehydrogenase family. Quinone oxidoreductase subfamily. In terms of assembly, component of the FERRY complex composed of five subunits, TBCK, PPP1R21, FERRY3, CRYZL1 and GATD1 with a ratio of 1:2:1:2:4, respectively.

The protein localises to the early endosome. Functionally, component of the FERRY complex (Five-subunit Endosomal Rab5 and RNA/ribosome intermediary). The FERRY complex directly interacts with mRNAs and RAB5A, and functions as a RAB5A effector involved in the localization and the distribution of specific mRNAs most likely by mediating their endosomal transport. The complex recruits mRNAs and ribosomes to early endosomes through direct mRNA-interaction. This chain is Quinone oxidoreductase-like protein 1 (Cryzl1), found in Mus musculus (Mouse).